The following is a 134-amino-acid chain: Profilin-1 (134 aa).

An intrachain disulfide couples Cys-13 to Cys-118. The Involved in PIP2 interaction motif lies at 84 to 100 (AVVRGKKGSGGITIKKT). A Phosphothreonine modification is found at Thr-114.

The protein belongs to the profilin family. In terms of assembly, occurs in many kinds of cells as a complex with monomeric actin in a 1:1 ratio. In terms of processing, phosphorylated by MAP kinases.

The protein resides in the cytoplasm. The protein localises to the cytoskeleton. Binds to actin and affects the structure of the cytoskeleton. At high concentrations, profilin prevents the polymerization of actin, whereas it enhances it at low concentrations. The polypeptide is Profilin-1 (Olea europaea (Common olive)).